A 410-amino-acid polypeptide reads, in one-letter code: Histone-lysine N-methyltransferase SUV39H2 (410 aa).

The Chromo domain maps to 47–105 (YEVEYLCDYKVVKDMEYYLVKWKGWPDSTNTWEPLQNLKCPLLLQQFSNDKHNYLSQVK). In terms of domain architecture, Pre-SET spans 189-247 (FGCSCTDCFFQKCCPAEAGVLLAYNKNQQIKIPPGTPIYECNSRCQCGPDCPNRIVQKG). The Zn(2+) site is built by Cys-191, Cys-193, Cys-196, Cys-201, Cys-202, Cys-229, Cys-233, Cys-235, and Cys-239. The region spanning 250–373 (YSLCIFRTSN…AGEELTFDYQ (124 aa)) is the SET domain. S-adenosyl-L-methionine-binding positions include 261-263 (RGW), Tyr-304, and 330-331 (NH). Residue Cys-333 participates in Zn(2+) binding. Ser-381, Ser-384, and Ser-388 each carry phosphoserine. The 17-residue stretch at 394 to 410 (VRTVCKCGAVTCRGYLN) folds into the Post-SET domain. Zn(2+) contacts are provided by Cys-398, Cys-400, and Cys-405.

Belongs to the class V-like SAM-binding methyltransferase superfamily. Histone-lysine methyltransferase family. Suvar3-9 subfamily. In terms of assembly, interacts with SMAD5. The large PER complex involved in the histone methylation is composed of at least PER2, CBX3, TRIM28, SUV39H1 and/or SUV39H2; CBX3 mediates the formation of the complex. In terms of processing, ubiquitinated by the DCX(DCAF13) E3 ubiquitin ligase complex, leading to its degradation.

Its subcellular location is the nucleus. It is found in the chromosome. The protein resides in the centromere. It catalyses the reaction L-lysyl(9)-[histone H3] + 3 S-adenosyl-L-methionine = N(6),N(6),N(6)-trimethyl-L-lysyl(9)-[histone H3] + 3 S-adenosyl-L-homocysteine + 3 H(+). In terms of biological role, histone methyltransferase that specifically trimethylates 'Lys-9' of histone H3 using monomethylated H3 'Lys-9' as substrate. H3 'Lys-9' trimethylation represents a specific tag for epigenetic transcriptional repression by recruiting HP1 (CBX1, CBX3 and/or CBX5) proteins to methylated histones. Mainly functions in heterochromatin regions, thereby playing a central role in the establishment of constitutive heterochromatin at pericentric and telomere regions. H3 'Lys-9' trimethylation is also required to direct DNA methylation at pericentric repeats. SUV39H1 is targeted to histone H3 via its interaction with RB1 and is involved in many processes, such as cell cycle regulation, transcriptional repression and regulation of telomere length. May participate in regulation of higher-order chromatin organization during spermatogenesis. Recruited by the large PER complex to the E-box elements of the circadian target genes such as PER2 itself or PER1, contributes to the conversion of local chromatin to a heterochromatin-like repressive state through H3 'Lys-9' trimethylation. The chain is Histone-lysine N-methyltransferase SUV39H2 (SUV39H2) from Macaca fascicularis (Crab-eating macaque).